Here is a 395-residue protein sequence, read N- to C-terminus: 8-amino-7-oxononanoate synthase (395 aa).

Residue Arg24 participates in substrate binding. Residue 111 to 112 participates in pyridoxal 5'-phosphate binding; that stretch reads GF. His136 contacts substrate. Pyridoxal 5'-phosphate-binding positions include Ser184, 209 to 212, and 240 to 243; these read DDAH and TLSK. Lys243 is modified (N6-(pyridoxal phosphate)lysine). Thr357 lines the substrate pocket.

Belongs to the class-II pyridoxal-phosphate-dependent aminotransferase family. BioF subfamily. In terms of assembly, homodimer. Requires pyridoxal 5'-phosphate as cofactor.

It carries out the reaction 6-carboxyhexanoyl-[ACP] + L-alanine + H(+) = (8S)-8-amino-7-oxononanoate + holo-[ACP] + CO2. It participates in cofactor biosynthesis; biotin biosynthesis. Catalyzes the decarboxylative condensation of pimeloyl-[acyl-carrier protein] and L-alanine to produce 8-amino-7-oxononanoate (AON), [acyl-carrier protein], and carbon dioxide. In Alkaliphilus oremlandii (strain OhILAs) (Clostridium oremlandii (strain OhILAs)), this protein is 8-amino-7-oxononanoate synthase.